The chain runs to 297 residues: Light-independent protochlorophyllide reductase iron-sulfur ATP-binding protein (297 aa).

Residues 41 to 46 (GIGKST) and Lys-70 each bind ATP. Ser-45 is a binding site for Mg(2+). Cys-126 and Cys-160 together coordinate [4Fe-4S] cluster. ATP contacts are provided by residues 211–212 (NR) and 235–237 (PDL).

This sequence belongs to the NifH/BchL/ChlL family. As to quaternary structure, homodimer. Protochlorophyllide reductase is composed of three subunits; BchL, BchN and BchB. [4Fe-4S] cluster is required as a cofactor.

The enzyme catalyses chlorophyllide a + oxidized 2[4Fe-4S]-[ferredoxin] + 2 ADP + 2 phosphate = protochlorophyllide a + reduced 2[4Fe-4S]-[ferredoxin] + 2 ATP + 2 H2O. It functions in the pathway porphyrin-containing compound metabolism; bacteriochlorophyll biosynthesis (light-independent). Component of the dark-operative protochlorophyllide reductase (DPOR) that uses Mg-ATP and reduced ferredoxin to reduce ring D of protochlorophyllide (Pchlide) to form chlorophyllide a (Chlide). This reaction is light-independent. The L component serves as a unique electron donor to the NB-component of the complex, and binds Mg-ATP. This is Light-independent protochlorophyllide reductase iron-sulfur ATP-binding protein from Methylorubrum populi (strain ATCC BAA-705 / NCIMB 13946 / BJ001) (Methylobacterium populi).